A 624-amino-acid chain; its full sequence is LRR receptor kinase BAK1 (624 aa).

The signal sequence occupies residues 1 to 25; the sequence is MAAPRWAVWAVLLLRLLVPAARVLA. The Extracellular portion of the chain corresponds to 26–237; sequence NMEGDALHSL…QSPGSSSSTG (212 aa). 4 LRR repeats span residues 91–115, 117–139, 140–163, and 164–188; these read LKNL…LGNL, NLVS…LGNL, LKLR…LTAI, and TALQ…SFSL. Residues Asn103, Asn114, Asn127, Asn149, and Asn175 are each glycosylated (N-linked (GlcNAc...) asparagine). The segment at 205-236 is disordered; the sequence is TTKPCPGAPPFSPPPPYNPPTPVQSPGSSSST. The span at 210-227 shows a compositional bias: pro residues; it reads PGAPPFSPPPPYNPPTPV. The helical transmembrane segment at 238-258 threads the bilayer; the sequence is AIAGGVAAGAALLFAIPAIGF. At 259 to 624 the chain is on the cytoplasmic side; that stretch reads AWYRRRKPQE…LHAVELSGPR (366 aa). The Protein kinase domain maps to 301–588; that stretch reads FSNKNILGRG…GLAERWEEWQ (288 aa). Residues 307-315 and Lys329 contribute to the ATP site; that span reads LGRGGFGKV. Asp428 serves as the catalytic Proton acceptor.

The protein belongs to the protein kinase superfamily. Ser/Thr protein kinase family. Forms homodimers. Interacts with BRI1. Interacts with REM4.1.

It localises to the cell membrane. It catalyses the reaction L-seryl-[protein] + ATP = O-phospho-L-seryl-[protein] + ADP + H(+). The enzyme catalyses L-threonyl-[protein] + ATP = O-phospho-L-threonyl-[protein] + ADP + H(+). LRR receptor kinase involved in defense response. Does not seem to be required specifically for XA21-mediated immunity or basal resistance to Xanthomonas oryzae pv. oryzae (Xoo), or immunity to Magnaporthe oryzae. Involved in brassinosteroid (BR) signaling pathway. Acts as a coreceptor of BRI1. Forms at the plasma membrane a receptor complex with BRI1 which is activated in response to brassinolide. Phosphorylates BRI1. Required for normal plant growth and leaf development. Possesses kinase activity in vitro. This is LRR receptor kinase BAK1 from Oryza sativa subsp. indica (Rice).